A 446-amino-acid chain; its full sequence is Probable carboxylesterase 16 (446 aa).

Residues 84 to 131 (PEPDSLRHKDNYNHQPRSDRRHSYGPNHNSPAPAERNESRRNSYGCNN) are disordered. Residues 87-105 (DSLRHKDNYNHQPRSDRRH) are compositionally biased toward basic and acidic residues. Positions 158-160 (HGG) match the Involved in the stabilization of the negatively charged intermediate by the formation of the oxyanion hole motif. Residues serine 274, aspartate 378, and histidine 408 contribute to the active site.

The protein belongs to the 'GDXG' lipolytic enzyme family. Expressed in roots, leaves, stems, flowers and siliques.

It catalyses the reaction a carboxylic ester + H2O = an alcohol + a carboxylate + H(+). Carboxylesterase acting on esters with varying acyl chain length. This chain is Probable carboxylesterase 16 (CXE16), found in Arabidopsis thaliana (Mouse-ear cress).